Consider the following 381-residue polypeptide: Homoserine O-succinyltransferase (381 aa).

One can recognise an AB hydrolase-1 domain in the interval 53–361; that stretch reads ILICHALSGS…DSVHGHDAFL (309 aa). The active-site Nucleophile is Ser157. A substrate-binding site is contributed by Arg227. Active-site residues include Asp324 and His357. Position 358 (Asp358) interacts with substrate.

Belongs to the AB hydrolase superfamily. MetX family. As to quaternary structure, homodimer.

The protein resides in the cytoplasm. It carries out the reaction L-homoserine + succinyl-CoA = O-succinyl-L-homoserine + CoA. It functions in the pathway amino-acid biosynthesis; L-methionine biosynthesis via de novo pathway; O-succinyl-L-homoserine from L-homoserine: step 1/1. In terms of biological role, transfers a succinyl group from succinyl-CoA to L-homoserine, forming succinyl-L-homoserine. The sequence is that of Homoserine O-succinyltransferase from Saccharophagus degradans (strain 2-40 / ATCC 43961 / DSM 17024).